A 191-amino-acid polypeptide reads, in one-letter code: UPF0228 protein MM_1428 (191 aa).

This sequence belongs to the UPF0228 family.

This Methanosarcina mazei (strain ATCC BAA-159 / DSM 3647 / Goe1 / Go1 / JCM 11833 / OCM 88) (Methanosarcina frisia) protein is UPF0228 protein MM_1428.